A 525-amino-acid chain; its full sequence is Probable alpha-galactosidase A (525 aa).

The N-terminal stretch at 1 to 17 (MHPSMTLLAILPPLVRA) is a signal peptide. Cysteine 40 and cysteine 72 form a disulfide bridge. Residues asparagine 43, asparagine 81, and asparagine 117 are each glycosylated (N-linked (GlcNAc...) asparagine). Residues cysteine 120 and cysteine 150 are joined by a disulfide bond. Residue aspartate 148 is the Nucleophile of the active site. N-linked (GlcNAc...) asparagine glycosylation is present at asparagine 197. Residue aspartate 206 is the Proton donor of the active site. One can recognise a Ricin B-type lectin domain in the interval 402 to 525 (PPDCPMVIPT…GLPSGVDIEA (124 aa)). 2 cysteine pairs are disulfide-bonded: cysteine 422/cysteine 434 and cysteine 459/cysteine 472.

It belongs to the glycosyl hydrolase 27 family.

The protein localises to the secreted. It carries out the reaction Hydrolysis of terminal, non-reducing alpha-D-galactose residues in alpha-D-galactosides, including galactose oligosaccharides, galactomannans and galactolipids.. Its function is as follows. Hydrolyzes a variety of simple alpha-D-galactoside as well as more complex molecules such as oligosaccharides and polysaccharides. The protein is Probable alpha-galactosidase A (aglA) of Aspergillus clavatus (strain ATCC 1007 / CBS 513.65 / DSM 816 / NCTC 3887 / NRRL 1 / QM 1276 / 107).